The primary structure comprises 163 residues: DNA endonuclease I-CreI (163 aa).

Mg(2+) contacts are provided by Gly19 and Asp20. Interaction with DNA stretches follow at residues Gln26–Gln38, Gln44–Gln47, Arg68–Arg70, and Ser138–Thr143.

Belongs to the LAGLIDADG endonuclease family. Homodimer. Mg(2+) serves as cofactor. Mn(2+) is required as a cofactor. Requires Co(2+) as cofactor. The cofactor is Ni(2+). It depends on Zn(2+) as a cofactor.

The protein resides in the plastid. Its subcellular location is the chloroplast. In terms of biological role, endonuclease involved in group I intron homing. Recognizes and cleaves a 19-24 bp palindromic DNA site. This is DNA endonuclease I-CreI from Chlamydomonas reinhardtii (Chlamydomonas smithii).